Reading from the N-terminus, the 502-residue chain is ATP synthase subunit alpha (502 aa).

Residue 169–176 (GDRQTGKT) participates in ATP binding.

This sequence belongs to the ATPase alpha/beta chains family. In terms of assembly, F-type ATPases have 2 components, CF(1) - the catalytic core - and CF(0) - the membrane proton channel. CF(1) has five subunits: alpha(3), beta(3), gamma(1), delta(1), epsilon(1). CF(0) has three main subunits: a(1), b(2) and c(9-12). The alpha and beta chains form an alternating ring which encloses part of the gamma chain. CF(1) is attached to CF(0) by a central stalk formed by the gamma and epsilon chains, while a peripheral stalk is formed by the delta and b chains.

It localises to the cell inner membrane. It carries out the reaction ATP + H2O + 4 H(+)(in) = ADP + phosphate + 5 H(+)(out). In terms of biological role, produces ATP from ADP in the presence of a proton gradient across the membrane. The alpha chain is a regulatory subunit. The sequence is that of ATP synthase subunit alpha from Oleidesulfovibrio alaskensis (strain ATCC BAA-1058 / DSM 17464 / G20) (Desulfovibrio alaskensis).